A 464-amino-acid chain; its full sequence is Phosphoglucosamine mutase (464 aa).

Serine 112 functions as the Phosphoserine intermediate in the catalytic mechanism. Residues serine 112, aspartate 252, aspartate 254, and aspartate 256 each coordinate Mg(2+). The residue at position 112 (serine 112) is a Phosphoserine.

The protein belongs to the phosphohexose mutase family. It depends on Mg(2+) as a cofactor. In terms of processing, activated by phosphorylation.

It carries out the reaction alpha-D-glucosamine 1-phosphate = D-glucosamine 6-phosphate. Catalyzes the conversion of glucosamine-6-phosphate to glucosamine-1-phosphate. The chain is Phosphoglucosamine mutase from Synechococcus sp. (strain CC9605).